A 306-amino-acid polypeptide reads, in one-letter code: D-alanine--D-alanine ligase (306 aa).

An ATP-grasp domain is found at 105–300 (KMIWQAAGIS…FDELVIQILE (196 aa)). 131–186 (TDRLGLPLIIKPAREGSTIGLNKVDYAQDMQSAYQTAAQHDSLVIAEQFIQGIELT) serves as a coordination point for ATP. Asp254, Glu267, and Asn269 together coordinate Mg(2+).

This sequence belongs to the D-alanine--D-alanine ligase family. The cofactor is Mg(2+). Requires Mn(2+) as cofactor.

It localises to the cytoplasm. The enzyme catalyses 2 D-alanine + ATP = D-alanyl-D-alanine + ADP + phosphate + H(+). Its pathway is cell wall biogenesis; peptidoglycan biosynthesis. In terms of biological role, cell wall formation. The polypeptide is D-alanine--D-alanine ligase (Nitrosomonas eutropha (strain DSM 101675 / C91 / Nm57)).